Consider the following 358-residue polypeptide: Probable tartrate dehydrogenase/decarboxylase TtuC' (358 aa).

Mn(2+) is bound by residues D222, D246, and D250.

Belongs to the isocitrate and isopropylmalate dehydrogenases family. Mg(2+) is required as a cofactor. It depends on Mn(2+) as a cofactor. The cofactor is K(+).

It is found in the cytoplasm. It carries out the reaction tartrate + NAD(+) = 2-hydroxy-3-oxosuccinate + NADH + H(+). It catalyses the reaction (2R,3S)-tartrate + NAD(+) = 2-hydroxy-3-oxosuccinate + NADH + H(+). The catalysed reaction is (2R,3R)-tartrate + NAD(+) = 2-hydroxy-3-oxosuccinate + NADH + H(+). The enzyme catalyses (2R,3R)-tartrate + H(+) = (R)-glycerate + CO2. It carries out the reaction (R)-malate + NAD(+) = pyruvate + CO2 + NADH. It functions in the pathway carbohydrate acid metabolism; tartrate degradation; 2-hydroxy-3-oxosuccinate from L-tartrate: step 1/1. Its pathway is carbohydrate acid metabolism; tartrate degradation; 2-hydroxy-3-oxosuccinate from meso-tartrate: step 1/1. It participates in carbohydrate acid metabolism; tartrate degradation; D-glycerate from L-tartrate: step 1/1. Its function is as follows. Has multiple catalytic activities. Apart from catalyzing the oxidation of (+)-tartrate to oxaloglycolate, also converts meso-tartrate to D-glycerate and catalyzes the oxidative decarboxylation of D-malate to pyruvate. The polypeptide is Probable tartrate dehydrogenase/decarboxylase TtuC' (ttuC') (Agrobacterium vitis (Rhizobium vitis)).